Consider the following 84-residue polypeptide: Sulfur carrier protein TusA (84 aa).

Catalysis depends on cysteine 19, which acts as the Cysteine persulfide intermediate.

This sequence belongs to the sulfur carrier protein TusA family. Interacts with IscS.

Its subcellular location is the cytoplasm. It functions in the pathway tRNA modification. In terms of biological role, sulfur carrier protein involved in sulfur trafficking in the cell. Part of a sulfur-relay system required for 2-thiolation during synthesis of 2-thiouridine of the modified wobble base 5-methylaminomethyl-2-thiouridine (mnm(5)s(2)U) in tRNA. Interacts with IscS and stimulates its cysteine desulfurase activity. Accepts an activated sulfur from IscS, which is then transferred to TusD, and thus determines the direction of sulfur flow from IscS to 2-thiouridine formation. Also appears to be involved in sulfur transfer for the biosynthesis of molybdopterin. The protein is Sulfur carrier protein TusA of Sodalis glossinidius (strain morsitans).